A 398-amino-acid chain; its full sequence is Cysteine protease ATG4A (398 aa).

The active-site Nucleophile is Cys-77. Active-site residues include Asp-279 and His-281. The short motif at 393–396 is the LIR element; sequence FEIL.

This sequence belongs to the peptidase C54 family. As to quaternary structure, interacts with ATG9A; the interaction is direct.

It localises to the cytoplasm. The catalysed reaction is [protein]-C-terminal L-amino acid-glycyl-phosphatidylethanolamide + H2O = [protein]-C-terminal L-amino acid-glycine + a 1,2-diacyl-sn-glycero-3-phosphoethanolamine. With respect to regulation, inhibited by N-ethylmaleimide. Redox-regulated during autophagy since reducing conditions activate ATG4A whereas an oxidizing environment such as the presence of H(2)O(2) inhibits its activity. Cysteine protease that plays a key role in autophagy by mediating both proteolytic activation and delipidation of ATG8 family proteins. The protease activity is required for proteolytic activation of ATG8 family proteins: cleaves the C-terminal amino acid of ATG8 proteins to reveal a C-terminal glycine. Exposure of the glycine at the C-terminus is essential for ATG8 proteins conjugation to phosphatidylethanolamine (PE) and insertion to membranes, which is necessary for autophagy. Preferred substrate is GABARAPL2 followed by MAP1LC3A and GABARAP. Protease activity is also required to counteract formation of high-molecular weight conjugates of ATG8 proteins (ATG8ylation): acts as a deubiquitinating-like enzyme that removes ATG8 conjugated to other proteins, such as ATG3. In addition to the protease activity, also mediates delipidation of ATG8 family proteins. Catalyzes delipidation of PE-conjugated forms of ATG8 proteins during macroautophagy. Compared to ATG4B, the major protein for proteolytic activation of ATG8 proteins, shows weaker ability to cleave the C-terminal amino acid of ATG8 proteins, while it displays stronger delipidation activity. Involved in phagophore growth during mitophagy independently of its protease activity and of ATG8 proteins: acts by regulating ATG9A trafficking to mitochondria and promoting phagophore-endoplasmic reticulum contacts during the lipid transfer phase of mitophagy. In Pongo abelii (Sumatran orangutan), this protein is Cysteine protease ATG4A.